The chain runs to 394 residues: Elongation factor Tu (394 aa).

Positions 10-204 (KPHINVGTIG…AMDNYIPIPE (195 aa)) constitute a tr-type G domain. Residues 19-26 (GHVDHGKT) form a G1 region. Residue 19–26 (GHVDHGKT) participates in GTP binding. Thr26 contacts Mg(2+). Positions 60 to 64 (GITIN) are G2. The segment at 81 to 84 (DCPG) is G3. Residues 81–85 (DCPGH) and 136–139 (NKVD) contribute to the GTP site. The segment at 136–139 (NKVD) is G4. Residues 174–176 (SAL) are G5.

The protein belongs to the TRAFAC class translation factor GTPase superfamily. Classic translation factor GTPase family. EF-Tu/EF-1A subfamily. Monomer.

The protein localises to the cytoplasm. The catalysed reaction is GTP + H2O = GDP + phosphate + H(+). Its function is as follows. GTP hydrolase that promotes the GTP-dependent binding of aminoacyl-tRNA to the A-site of ribosomes during protein biosynthesis. The polypeptide is Elongation factor Tu (Methylacidiphilum infernorum (isolate V4) (Methylokorus infernorum (strain V4))).